A 229-amino-acid polypeptide reads, in one-letter code: C-type lectin domain family 1 member B (229 aa).

Over 1 to 33 (MQDEDGYITLNIKTRKPALISVGSASSSWWRVM) the chain is Cytoplasmic. The residue at position 7 (Y7) is a Phosphotyrosine. An ITAM motif is present at residues 7 to 10 (YITL). The chain crosses the membrane as a helical; Signal-anchor for type II membrane protein span at residues 34–54 (ALILLILCVGMVVGLVALGIW). The Extracellular segment spans residues 55-229 (SVMQRNYLQG…AGMTKVDQLP (175 aa)). A glycan (N-linked (GlcNAc...) asparagine) is linked at N68. A disulfide bond links C102 and C113. Residues 109-217 (YGDSCYGFFR…CENKHYLMCE (109 aa)) enclose the C-type lectin domain. N-linked (GlcNAc...) asparagine glycosylation is found at N120 and N134. Intrachain disulfides connect C130/C216 and C195/C208.

In terms of assembly, homodimer. Interacts (via cytoplasmic domain) with RACK1; promotes CLEC1B ubiquitination and proteasome-mediated degradation. Interacts (dimer) with SYK (via SH2 domains). Interacts with PDPN; the interaction is independent of CLEC1B glycosylation and activates CLEC1B. In terms of processing, glycosylated. Post-translationally, phosphorylated on tyrosine residue in response to rhodocytin binding. In terms of tissue distribution, expressed preferentially in the liver. Also expressed in immune cells of myeloid origin and on the surface of platelets.

The protein resides in the membrane. In terms of biological role, C-type lectin-like receptor that functions as a platelet receptor for the lymphatic endothelial marker, PDPN. After ligand activation, signals via sequential activation of SRC and SYK tyrosine kinases leading to activation of PLCG2. Its function is as follows. (Microbial infection) Acts as a receptor for the platelet-aggregating snake venom protein rhodocytin. Rhodocytin binding leads to tyrosine phosphorylation and this promotes the binding of spleen tyrosine kinase (SYK) and initiation of downstream tyrosine phosphorylation events and activation of PLCG2. Functionally, (Microbial infection) Acts as an attachment factor for Human immunodeficiency virus type 1 (HIV-1) and facilitates its capture by platelets. This Homo sapiens (Human) protein is C-type lectin domain family 1 member B (CLEC1B).